We begin with the raw amino-acid sequence, 427 residues long: C4-dicarboxylate transport protein (427 aa).

The next 9 membrane-spanning stretches (helical) occupy residues 5–25 (IFSSLYFQVLLAITLGVFLGH), 44–64 (LIKMIIAPVIFCTVVTGIAGM), 76–96 (IALLYFEVVSTIALVIGLCVV), 142–162 (IGAFASGNILQVLLFAVLFGF), 184–206 (VIFGIINMIMRLAPVGAFGAMAF), 222–242 (LIACFYVTCLLFIFMVLGSIA), 307–327 (IYLTMAAIFIAQATNTPLDLF), 330–350 (ITLLVVLLISSKGAAGVTGSG), and 352–372 (IVLAATISAVGHLPLAGLALI).

Belongs to the dicarboxylate/amino acid:cation symporter (DAACS) (TC 2.A.23) family.

The protein resides in the cell inner membrane. Responsible for the transport of dicarboxylates such as succinate, fumarate, and malate from the periplasm across the membrane. The protein is C4-dicarboxylate transport protein of Aeromonas salmonicida (strain A449).